The primary structure comprises 245 residues: Probable phosphatase YcdX (245 aa).

The Zn(2+) site is built by His7, His9, His15, His40, Glu73, His101, His131, Asp192, and His194.

This sequence belongs to the PHP family. As to quaternary structure, homotrimer. It depends on Zn(2+) as a cofactor.

This Salmonella agona (strain SL483) protein is Probable phosphatase YcdX.